The sequence spans 35 residues: Small toxic polypeptide LdrD (35 aa).

The helical transmembrane segment at 10–32 threads the bilayer; it reads FWHDLAAPVIAGILASMIVNWLN.

It belongs to the Ldr toxic peptide family.

The protein localises to the cell inner membrane. Toxic component of a type I toxin-antitoxin (TA) system. Overexpression causes rapid cell killing and nucleoid condensation of the host cell. Overexpression induces stress-response and a number of membrane protein genes. May inhibit ATP synthesis due to its insertion in the cell inner membrane. The protein is Small toxic polypeptide LdrD (ldrD) of Escherichia coli (strain K12).